Consider the following 207-residue polypeptide: Urease accessory protein UreG (207 aa).

16 to 23 contributes to the GTP binding site; that stretch reads GPVGSGKT.

It belongs to the SIMIBI class G3E GTPase family. UreG subfamily. In terms of assembly, homodimer. UreD, UreF and UreG form a complex that acts as a GTP-hydrolysis-dependent molecular chaperone, activating the urease apoprotein by helping to assemble the nickel containing metallocenter of UreC. The UreE protein probably delivers the nickel.

It is found in the cytoplasm. Facilitates the functional incorporation of the urease nickel metallocenter. This process requires GTP hydrolysis, probably effectuated by UreG. The chain is Urease accessory protein UreG from Shewanella halifaxensis (strain HAW-EB4).